Reading from the N-terminus, the 328-residue chain is Formimidoylglutamase (328 aa).

Residues H133, D159, H161, D163, D253, and D255 each contribute to the Mn(2+) site.

This sequence belongs to the arginase family. It depends on Mn(2+) as a cofactor.

The enzyme catalyses N-formimidoyl-L-glutamate + H2O = formamide + L-glutamate. Its pathway is amino-acid degradation; L-histidine degradation into L-glutamate; L-glutamate from N-formimidoyl-L-glutamate (hydrolase route): step 1/1. Catalyzes the conversion of N-formimidoyl-L-glutamate to L-glutamate and formamide. The polypeptide is Formimidoylglutamase (Streptococcus pyogenes serotype M5 (strain Manfredo)).